Here is a 588-residue protein sequence, read N- to C-terminus: Neopullulanase (588 aa).

Residues Asn147, Asn149, Ser153, Gly172, and Asp174 each coordinate Ca(2+). Substrate-binding residues include His247 and Arg326. The active-site Nucleophile is Asp328. The Proton donor role is filled by Glu357. Substrate is bound by residues 423-424, Asp468, and Arg472; that span reads HD.

It belongs to the glycosyl hydrolase 13 family. In terms of assembly, homodimer. It depends on Ca(2+) as a cofactor.

It catalyses the reaction Hydrolysis of pullulan to panose (6-alpha-D-glucosylmaltose).. Functionally, hydrolyzes pullulan efficiently but only a small amount of starch. Endohydrolysis of 1,4-alpha-glucosidic linkages in pullulan to form panose. Also cleaves (1-6)-alpha-glucosidic linkages to form maltotriose. This chain is Neopullulanase (nplT), found in Geobacillus stearothermophilus (Bacillus stearothermophilus).